Here is a 144-residue protein sequence, read N- to C-terminus: Large ribosomal subunit protein uL15 (144 aa).

Residues 1–54 (MHLNTLKPAEGAKKLAKRKGRGQGSGNGKMAGRGHKGQKSRSGGMPKIGFEGGQ) form a disordered region. Positions 22-31 (GQGSGNGKMA) are enriched in gly residues.

It belongs to the universal ribosomal protein uL15 family. In terms of assembly, part of the 50S ribosomal subunit.

Functionally, binds to the 23S rRNA. The protein is Large ribosomal subunit protein uL15 of Hydrogenovibrio crunogenus (strain DSM 25203 / XCL-2) (Thiomicrospira crunogena).